The chain runs to 316 residues: MSAMRRCTCFIICLLTSYTYGTTELVEYTRGDIEFDSSNGEKIIDISTTKGIRCEWKVSSDYYTACFKWKFIWDQVDKYEVAGFSGQITVNYTTDSEGQKTRTVKVNLTDPGGEIWYNVSRSRYLSTYYASYNYTLEPQKRHMEAMELDKYFAPVDDRDAVLIVEGKKLHVSSCFLSFHSTYFHDLFEYDNSTSLLNIEIPVEGVSYEDLGLLLSVVHSTATFPNDGNSKKLLELASQFQTPYVLGLVENHLLTNTFAWNETLMLLADKYGLMRLLGKSIRRIDSIEKARQLKDSVFLELSDSAKVKVAYHMIQLL.

The signal sequence occupies residues 1 to 21 (MSAMRRCTCFIICLLTSYTYG). Residues Asn91, Asn107, Asn118, Asn133, Asn191, and Asn260 are each glycosylated (N-linked (GlcNAc...) asparagine). Residues 158-226 (RDAVLIVEGK…VHSTATFPND (69 aa)) enclose the BTB domain.

The protein resides in the secreted. This Caenorhabditis elegans protein is BTB/POZ domain-containing protein Y57A10B.3 (btb-14).